The sequence spans 387 residues: Mitochondrial import inner membrane translocase subunit TIM50 (387 aa).

The N-terminal 26 residues, 1–26 (MSAVSVYPMCVRASRGLLRLRQGARC), are a transit peptide targeting the mitochondrion. Over 27 to 100 (STAPPLLDVV…QKENTAYAKK (74 aa)) the chain is Mitochondrial matrix. The interval 61–93 (LQQQQKSQEQPPPEGEDSGHKQDEQGEDKKQKE) is disordered. Basic and acidic residues predominate over residues 77–93 (DSGHKQDEQGEDKKQKE). Residues 101 to 121 (MVLRLAGIMGLGGTVGIVYIF) form a helical membrane-spanning segment. The Mitochondrial intermembrane portion of the chain corresponds to 122 to 387 (GSNSVDEQGN…AGRFWSRKQQ (266 aa)). The region spanning 178–321 (YYQPPYTLVL…YDLAAFLKTI (144 aa)) is the FCP1 homology domain.

The protein belongs to the TIM50 family. In terms of assembly, component of the TIM23 complex at least composed of timm23, timm17 and timm50.

The protein localises to the mitochondrion inner membrane. Its function is as follows. Essential component of the TIM23 complex, a complex that mediates the translocation of transit peptide-containing proteins across the mitochondrial inner membrane. The sequence is that of Mitochondrial import inner membrane translocase subunit TIM50 (timm50) from Danio rerio (Zebrafish).